The following is a 123-amino-acid chain: RHEVPQANLECDEGAMDLKISTGNMVALYQILSASKDSDCPAGGAVTWTDQVVAGLRICMGCPVELDLESEELKVPVAVSISKRRPPGWSPLRAAVTSFNEKEFSPPAPPSRAEYSLYFDMRK.

Bradykinin is released from kininogen by kallikrein. Post-translationally, N-glycosylated. Contains sulfated N-acetylglucosamine and O-acetylated sialic acids as terminal elements on biantennary and triantennary N-glycans.

Functionally, inhibits papain and ficin (cysteine proteinases) but not trypsin (a serine proteinase). This Gadus morhua (Atlantic cod) protein is Kininogen.